Here is a 53-residue protein sequence, read N- to C-terminus: Conotoxin Vc5.3 (53 aa).

The first 15 residues, valine 1 to alanine 15, serve as a signal peptide directing secretion. Positions arginine 16 to arginine 41 are excised as a propeptide.

The protein belongs to the conotoxin T superfamily. In terms of processing, contains 2 disulfide bonds that can be either 'C1-C3, C2-C4' or 'C1-C4, C2-C3', since these disulfide connectivities have been observed for conotoxins with cysteine framework V (for examples, see AC P0DQQ7 and AC P81755). In terms of tissue distribution, expressed by the venom duct.

It is found in the secreted. This Conus victoriae (Queen Victoria cone) protein is Conotoxin Vc5.3.